Reading from the N-terminus, the 330-residue chain is NADH-quinone oxidoreductase subunit H (330 aa).

The next 8 helical transmembrane spans lie at 3–23 (AAFV…FSAL), 76–96 (PVFM…MAAI), 118–138 (VGLL…LLAG), 161–181 (EVVT…ISLV), 188–208 (AGGM…LFLI), 244–264 (FFIG…LIFL), 272–292 (FIPG…LFLW), and 307–327 (WLCW…TGIV).

Belongs to the complex I subunit 1 family. In terms of assembly, NDH-1 is composed of 14 different subunits. Subunits NuoA, H, J, K, L, M, N constitute the membrane sector of the complex.

The protein resides in the cell inner membrane. It carries out the reaction a quinone + NADH + 5 H(+)(in) = a quinol + NAD(+) + 4 H(+)(out). NDH-1 shuttles electrons from NADH, via FMN and iron-sulfur (Fe-S) centers, to quinones in the respiratory chain. The immediate electron acceptor for the enzyme in this species is believed to be ubiquinone. Couples the redox reaction to proton translocation (for every two electrons transferred, four hydrogen ions are translocated across the cytoplasmic membrane), and thus conserves the redox energy in a proton gradient. This subunit may bind ubiquinone. The sequence is that of NADH-quinone oxidoreductase subunit H from Nitratiruptor sp. (strain SB155-2).